The chain runs to 166 residues: Lipoprotein signal peptidase (166 aa).

4 helical membrane passes run 10–30 (GGAL…DQLT), 46–66 (LTPF…GFLA), 71–91 (WQRW…CYLL), and 100–120 (FSLS…DRLI). Catalysis depends on residues aspartate 126 and aspartate 144. The helical transmembrane segment at 135–155 (WHWPAFNLADSAITVGAVLLI) threads the bilayer.

This sequence belongs to the peptidase A8 family.

It is found in the cell inner membrane. It carries out the reaction Release of signal peptides from bacterial membrane prolipoproteins. Hydrolyzes -Xaa-Yaa-Zaa-|-(S,diacylglyceryl)Cys-, in which Xaa is hydrophobic (preferably Leu), and Yaa (Ala or Ser) and Zaa (Gly or Ala) have small, neutral side chains.. It participates in protein modification; lipoprotein biosynthesis (signal peptide cleavage). This protein specifically catalyzes the removal of signal peptides from prolipoproteins. The protein is Lipoprotein signal peptidase of Burkholderia thailandensis (strain ATCC 700388 / DSM 13276 / CCUG 48851 / CIP 106301 / E264).